The primary structure comprises 321 residues: Probable UDP-sugar transporter protein SLC35A4 (321 aa).

The Cytoplasmic segment spans residues Met-1 to Gln-22. A helical transmembrane segment spans residues Ile-23–Ile-43. Residues Tyr-44 to Ser-56 are Lumenal-facing. A helical transmembrane segment spans residues Ser-57–Ile-77. Topologically, residues Gln-78 to Leu-91 are cytoplasmic. The chain crosses the membrane as a helical span at residues Ala-92 to Ile-112. Residues Gln-113–Ser-119 are Lumenal-facing. Residues Ser-120–Leu-140 form a helical membrane-spanning segment. The Cytoplasmic portion of the chain corresponds to Arg-141 to Trp-149. A helical transmembrane segment spans residues Leu-150–Leu-170. The Lumenal segment spans residues Glu-171–Tyr-180. The helical transmembrane segment at Val-181 to Val-201 threads the bilayer. The Cytoplasmic portion of the chain corresponds to Tyr-202–Lys-211. The chain crosses the membrane as a helical span at residues Ile-212–Ala-232. Residues His-233–Ser-247 lie on the Lumenal side of the membrane. A helical transmembrane segment spans residues Val-248–Met-268. Over Lys-269 to Lys-321 the chain is Cytoplasmic.

This sequence belongs to the nucleotide-sugar transporter family. SLC35A subfamily.

It is found in the golgi apparatus membrane. The catalysed reaction is CDP-L-ribitol(in) + CDP(out) = CDP-L-ribitol(out) + CDP(in). Its function is as follows. Mediates the transport of CDP-ribitol. Does not exhibit CMP-sialic acid, UDP-galactose and UDP-N-acetylglucosamine transport activity. This Xenopus tropicalis (Western clawed frog) protein is Probable UDP-sugar transporter protein SLC35A4.